The primary structure comprises 209 residues: Large ribosomal subunit protein uL3 (209 aa).

The segment at 141-163 (RAVGSMGASSDPSRTFKNKRMPG) is disordered.

Belongs to the universal ribosomal protein uL3 family. As to quaternary structure, part of the 50S ribosomal subunit. Forms a cluster with proteins L14 and L19.

Its function is as follows. One of the primary rRNA binding proteins, it binds directly near the 3'-end of the 23S rRNA, where it nucleates assembly of the 50S subunit. The polypeptide is Large ribosomal subunit protein uL3 (Clostridium botulinum (strain Langeland / NCTC 10281 / Type F)).